The primary structure comprises 152 residues: Deoxyuridine 5'-triphosphate nucleotidohydrolase (152 aa).

Residues 71–73 (RSG), N84, 88–90 (LID), and M98 contribute to the substrate site.

The protein belongs to the dUTPase family. It depends on Mg(2+) as a cofactor.

It carries out the reaction dUTP + H2O = dUMP + diphosphate + H(+). It participates in pyrimidine metabolism; dUMP biosynthesis; dUMP from dCTP (dUTP route): step 2/2. In terms of biological role, this enzyme is involved in nucleotide metabolism: it produces dUMP, the immediate precursor of thymidine nucleotides and it decreases the intracellular concentration of dUTP so that uracil cannot be incorporated into DNA. The polypeptide is Deoxyuridine 5'-triphosphate nucleotidohydrolase (Klebsiella pneumoniae (strain 342)).